Reading from the N-terminus, the 391-residue chain is 3-ketoacyl-CoA thiolase (391 aa).

Cysteine 95 (acyl-thioester intermediate) is an active-site residue. Residues histidine 347 and cysteine 377 each act as proton acceptor in the active site.

This sequence belongs to the thiolase-like superfamily. Thiolase family. Heterotetramer of two alpha chains (FadB) and two beta chains (FadA).

The protein resides in the cytoplasm. The catalysed reaction is an acyl-CoA + acetyl-CoA = a 3-oxoacyl-CoA + CoA. It functions in the pathway lipid metabolism; fatty acid beta-oxidation. Catalyzes the final step of fatty acid oxidation in which acetyl-CoA is released and the CoA ester of a fatty acid two carbons shorter is formed. This Pseudomonas syringae pv. tomato (strain ATCC BAA-871 / DC3000) protein is 3-ketoacyl-CoA thiolase.